Here is a 679-residue protein sequence, read N- to C-terminus: Enzymatic polyprotein (679 aa).

The protease stretch occupies residues 40-130 (LHCFVDTGAS…LYEPFIQFTD (91 aa)). The active site involves Asp45. The Reverse transcriptase domain occupies 272 to 452 (LKVIKPSKSP…KKINFLGLEI (181 aa)).

Belongs to the caulimoviridae enzymatic polyprotein family.

It catalyses the reaction DNA(n) + a 2'-deoxyribonucleoside 5'-triphosphate = DNA(n+1) + diphosphate. Encodes for at least two polypeptides: protease (PR) and reverse transcriptase (RT). The protease processes the polyprotein in cis. Reverse transcriptase is multifunctional enzyme that converts the viral RNA genome into dsDNA in viral cytoplasmic capsids. This enzyme displays a DNA polymerase activity that can copy either DNA or RNA templates, and a ribonuclease H (RNase H) activity that cleaves the RNA strand of RNA-DNA heteroduplexes in a partially processive 3'- to 5'-endonucleasic mode. Neo-synthesized pregenomic RNA (pgRNA) are encapsidated, and reverse-transcribed inside the nucleocapsid. Partial (+)DNA is synthesized from the (-)DNA template and generates the relaxed circular DNA (RC-DNA) genome. After budding and infection, the RC-DNA migrates in the nucleus, and is converted into a plasmid-like covalently closed circular DNA (cccDNA). In Cauliflower mosaic virus (strain CM-1841) (CaMV), this protein is Enzymatic polyprotein.